A 175-amino-acid polypeptide reads, in one-letter code: Transcriptional repressor NrdR (175 aa).

A zinc finger lies at 3-34 (CPICQDTNSRVLESRSAESGKSIRRRRECMNC). The ATP-cone domain maps to 49–139 (ITIIKRDGKK…VYRKFQGIRD (91 aa)).

Belongs to the NrdR family. Zn(2+) is required as a cofactor.

Functionally, negatively regulates transcription of bacterial ribonucleotide reductase nrd genes and operons by binding to NrdR-boxes. The sequence is that of Transcriptional repressor NrdR from Trichodesmium erythraeum (strain IMS101).